Consider the following 611-residue polypeptide: UPF0508 protein SCY_3114 (611 aa).

It belongs to the UPF0508 family.

This Saccharomyces cerevisiae (strain YJM789) (Baker's yeast) protein is UPF0508 protein SCY_3114.